We begin with the raw amino-acid sequence, 201 residues long: Holliday junction branch migration complex subunit RuvA (201 aa).

The interval 1–63 (MYDYIKGIVK…EDNISLFGFQ (63 aa)) is domain I. The domain II stretch occupies residues 64-142 (STEERYLFKK…DVVASEIVYK (79 aa)). The segment at 143 to 153 (AAENDIVTGLS) is flexible linker. A domain III region spans residues 153–201 (SPQLEEAVLALEALGYSTRELKKVIPKMAKENDLTSDAYIKLALRLMTK).

The protein belongs to the RuvA family. Homotetramer. Forms an RuvA(8)-RuvB(12)-Holliday junction (HJ) complex. HJ DNA is sandwiched between 2 RuvA tetramers; dsDNA enters through RuvA and exits via RuvB. An RuvB hexamer assembles on each DNA strand where it exits the tetramer. Each RuvB hexamer is contacted by two RuvA subunits (via domain III) on 2 adjacent RuvB subunits; this complex drives branch migration. In the full resolvosome a probable DNA-RuvA(4)-RuvB(12)-RuvC(2) complex forms which resolves the HJ.

The protein resides in the cytoplasm. The RuvA-RuvB-RuvC complex processes Holliday junction (HJ) DNA during genetic recombination and DNA repair, while the RuvA-RuvB complex plays an important role in the rescue of blocked DNA replication forks via replication fork reversal (RFR). RuvA specifically binds to HJ cruciform DNA, conferring on it an open structure. The RuvB hexamer acts as an ATP-dependent pump, pulling dsDNA into and through the RuvAB complex. HJ branch migration allows RuvC to scan DNA until it finds its consensus sequence, where it cleaves and resolves the cruciform DNA. The polypeptide is Holliday junction branch migration complex subunit RuvA (Listeria innocua serovar 6a (strain ATCC BAA-680 / CLIP 11262)).